Here is a 292-residue protein sequence, read N- to C-terminus: Short chain dehydrogenases/reductase notP' (292 aa).

The interval M1 to S25 is disordered. Residues L48, D97, K158, Y193, K197, I230, and T232 each coordinate NADP(+). The Proton donor role is filled by Y193. The active-site Lowers pKa of active site Tyr is the K197.

It belongs to the short-chain dehydrogenases/reductases (SDR) family.

Functionally, short chain dehydrogenases/reductase; part of the gene cluster that mediates the biosynthesis of notoamide, a fungal indole alkaloid that belongs to a family of natural products containing a characteristic bicyclo[2.2.2]diazaoctane core. The first step of notoamide biosynthesis involves coupling of L-proline and L-tryptophan by the bimodular NRPS notE', to produce cyclo-L-tryptophan-L-proline called brevianamide F. The reverse prenyltransferase notF' then acts as a deoxybrevianamide E synthase and converts brevianamide F to deoxybrevianamide E via reverse prenylation at C-2 of the indole ring leading to the bicyclo[2.2.2]diazaoctane core. Deoxybrevianamide E is further hydroxylated at C-6 of the indole ring, likely catalyzed by the cytochrome P450 monooxygenase notG', to yield 6-hydroxy-deoxybrevianamide E. 6-hydroxy-deoxybrevianamide E is a specific substrate of the prenyltransferase notC' for normal prenylation at C-7 to produce 6-hydroxy-7-prenyl-deoxybrevianamide, also called notoamide S. As the proposed pivotal branching point in notoamide biosynthesis, notoamide S can be diverted to notoamide E through an oxidative pyran ring closure putatively catalyzed by either notH' cytochrome P450 monooxygenase or the notD' FAD-linked oxidoreductase. This step would be followed by an indole 2,3-epoxidation-initiated pinacol-like rearrangement catalyzed by the notB' FAD-dependent monooxygenase leading to the formation of notoamide C and notoamide D. On the other hand notoamide S is converted to notoamide T by notH' (or notD'), a bifunctional oxidase that also functions as the intramolecular Diels-Alderase responsible for generation of (-)-notoamide T. To generate antipodal (+)-notoaminide T, notH (or notD) in Aspergillus strain MF297-2 is expected to catalyze a Diels-Alder reaction leading to the opposite stereochemistry. The remaining oxidoreductase notD' (or notH') likely catalyzes the oxidative pyran ring formation to yield (-)-stephacidin A. The FAD-dependent monooxygenase notI' is highly similar to notB' and is predicted to catalyze a similar conversion from (-)-stephacidin A to (+)-notoamide B via the 2,3-epoxidation of (-)-stephacidin A followed by a pinacol-type rearrangement. Finally, it remains unclear which enzyme could be responsible for the final hydroxylation steps leading to notoamide A and sclerotiamide. The function of notP' in the notoamide biosynthesis has not been determined yet. This chain is Short chain dehydrogenases/reductase notP', found in Aspergillus versicolor.